We begin with the raw amino-acid sequence, 569 residues long: Oxygen-dependent choline dehydrogenase (569 aa).

An FAD-binding site is contributed by 9-38 (DYVIIGGGSAGSVLGNRLSEDKDKEVLVLE). His475 functions as the Proton acceptor in the catalytic mechanism.

It belongs to the GMC oxidoreductase family. Requires FAD as cofactor.

It carries out the reaction choline + A = betaine aldehyde + AH2. The enzyme catalyses betaine aldehyde + NAD(+) + H2O = glycine betaine + NADH + 2 H(+). It participates in amine and polyamine biosynthesis; betaine biosynthesis via choline pathway; betaine aldehyde from choline (cytochrome c reductase route): step 1/1. Involved in the biosynthesis of the osmoprotectant glycine betaine. Catalyzes the oxidation of choline to betaine aldehyde and betaine aldehyde to glycine betaine at the same rate. The sequence is that of Oxygen-dependent choline dehydrogenase from Staphylococcus aureus (strain MSSA476).